The primary structure comprises 324 residues: T-cell acute lymphocytic leukemia protein 1 homolog (324 aa).

The segment at 1–49 is disordered; sequence MMEKLKSEQFPLSPSAEGCASPPRGDGDARGKQEGTTAETGEHRLPEEL. Residues 185-237 form the bHLH domain; the sequence is VRRIFTNSRERWRQQNVNGAFAELRKLIPTHPPDKKLSKNEILRLAMKYINFL. Residues 276-324 are disordered; that stretch reads SPNSSCGSLLDGDASPESFTEDQDSSVESRPSARGLHHSSLPLDGNAQR.

As to expression, expressed in hemopoietic and endothelial lineages. Isoform beta emerges first, expressing in the entire anterior and posterior lateral mesoderm (ALM and PLM respectively), and in the ventral wall of the dorsal aorta, where definitive hemopoiesis begins. Isoform alpha expresses later as two pairs of stripes in the PLM and ALM, and becomes restricted to the intermediate cell mass (ICM) by the 18-somite stage. The ICM is the key site of primitive hemopoiesis, giving rise to the erythroid lineage. Also expressed in all stages of endocardial cell migration and in the developing midbrain, hindbrain and spinal cord. In adults, expressed in the main hemopoietic organs, namely the kidney (where isoform alpha is the predominant isoform) and the spleen. Also expressed in the liver, gill and gonads.

It is found in the nucleus. Transcription factor that plays a pivotal role in hemopoietic and endothelial development, acting synergistically with lmo2 and downstream of clo. Specifies mesodermal precursors to a hemangioblast cell fate. Hemangioblasts are bipotential precursors of blood and endothelium, and in the absence of hemopoietic induction cues such as gata1, tal1/scl-lmo2-induced hemangioblasts differentiate into endothelial cells. Isoform alpha and isoform beta are redundant for the initiation of primitive hemopoiesis but have distinct roles in the regulation of primitive erythroid differentiation and definitive hemopoietic stem cell specification, most likely due to differences in expression levels. Specification of definitive hemopoietic stem cells requires isoform beta. DNA binding is required for erythroid maturation, but not for its other hemopoietic functions. Endothelial roles include development of the dorsal aorta, the site of definitive hemopoiesis in the embryo. Required for angiogenesis but not angioblast specification. Has an additional role in endocardium formation during heart development. May play a role in central nervous system development. This Danio rerio (Zebrafish) protein is T-cell acute lymphocytic leukemia protein 1 homolog.